A 260-amino-acid chain; its full sequence is Probable carbohydrate esterase At4g34215 (260 aa).

The segment at 1-22 is disordered; sequence MEGGSITPGEDKPEIQSPIPPN. Catalysis depends on residues serine 31, aspartate 235, and histidine 238.

Belongs to the carbohydrate esterase 6 family.

The sequence is that of Probable carbohydrate esterase At4g34215 from Arabidopsis thaliana (Mouse-ear cress).